The following is a 24-amino-acid chain: Waglerin-3 (24 aa).

The span at 1 to 10 shows a compositional bias: basic and acidic residues; that stretch reads SLGGKPDLRP. A disordered region spans residues 1 to 24; it reads SLGGKPDLRPCHPPCHYIPRPKPR. C11 and C15 are disulfide-bonded.

This sequence belongs to the waglerin family. Waglerin-1 is monomeric. In terms of processing, amidation of the waglerin-1 C-terminus increases the affinity by 2-fold. In terms of tissue distribution, expressed by the venom gland.

The protein resides in the secreted. Waglerin-1 selectively blocks the epsilon subunit of muscle nicotinic acetylcholine receptor (nAChR). Also has effects on rodent ionotropic GABA(A) receptors (GABR), since it potentiates I(GABA) in some neurons and depresses I(GABA) in others. In mice, it elicits tachypnea, ocular proptosis, rapid collapse and spasms, whereas no toxic effects on respiration and blood pressure are observed in rats. In terms of biological role, waglerin-3 selectively blocks the epsilon subunit of muscle nicotinic acetylcholine receptor (nAChR). It elicits tachypnea, ocular proptosis, rapid collapse and spasms in mice. It causes death by respiratory failure. The sequence is that of Waglerin-3 from Tropidolaemus wagleri (Wagler's pit viper).